Here is a 312-residue protein sequence, read N- to C-terminus: Deoxyribonuclease-1-like 1 (312 aa).

Residues 1 to 35 (MPSGQPVFPRRVPDAYIAMRGLVVASLLILLVGGT) form the signal peptide. Asn-102 carries an N-linked (GlcNAc...) asparagine glycan. The active site involves Glu-113. Asn-133 carries an N-linked (GlcNAc...) asparagine glycan. His-164 is an active-site residue. Residues Cys-203 and Cys-240 are joined by a disulfide bond. An N-linked (GlcNAc...) asparagine glycan is attached at Asn-239.

The protein belongs to the DNase I family.

It is found in the endoplasmic reticulum. The polypeptide is Deoxyribonuclease-1-like 1 (Dnase1l1) (Rattus norvegicus (Rat)).